The primary structure comprises 196 residues: Ankyrin repeat domain-containing protein 66 (196 aa).

3 ANK repeats span residues 7-37, 43-72, and 76-105; these read SDMT…DPNY, NDRT…RPCL, and VGWT…AIDA. The interval 152–196 is disordered; sequence ERDEDWDAKKRELELSLPSLNQNMNKKNKKSRGPTRPSNTKGRRV. Residues 187–196 show a composition bias toward polar residues; it reads RPSNTKGRRV.

This is Ankyrin repeat domain-containing protein 66 (ANKRD66) from Homo sapiens (Human).